The primary structure comprises 447 residues: Tubulin alpha-1 chain (447 aa).

GTP-binding residues include Q11, E72, S141, G145, T146, T180, N207, and N229. Residue E72 participates in Mg(2+) binding. Residue E255 is part of the active site.

It belongs to the tubulin family. As to quaternary structure, dimer of alpha and beta chains. A typical microtubule is a hollow water-filled tube with an outer diameter of 25 nm and an inner diameter of 15 nM. Alpha-beta heterodimers associate head-to-tail to form protofilaments running lengthwise along the microtubule wall with the beta-tubulin subunit facing the microtubule plus end conferring a structural polarity. Microtubules usually have 13 protofilaments but different protofilament numbers can be found in some organisms and specialized cells. The cofactor is Mg(2+).

The protein localises to the cytoplasm. Its subcellular location is the cytoskeleton. The enzyme catalyses GTP + H2O = GDP + phosphate + H(+). Its function is as follows. Tubulin is the major constituent of microtubules, a cylinder consisting of laterally associated linear protofilaments composed of alpha- and beta-tubulin heterodimers. Microtubules grow by the addition of GTP-tubulin dimers to the microtubule end, where a stabilizing cap forms. Below the cap, tubulin dimers are in GDP-bound state, owing to GTPase activity of alpha-tubulin. This Saccharomyces cerevisiae (strain ATCC 204508 / S288c) (Baker's yeast) protein is Tubulin alpha-1 chain (TUB1).